Reading from the N-terminus, the 398-residue chain is Probable aminomethyltransferase (398 aa).

This sequence belongs to the GcvT family. In terms of assembly, the glycine cleavage system is composed of four proteins: P, T, L and H.

It carries out the reaction N(6)-[(R)-S(8)-aminomethyldihydrolipoyl]-L-lysyl-[protein] + (6S)-5,6,7,8-tetrahydrofolate = N(6)-[(R)-dihydrolipoyl]-L-lysyl-[protein] + (6R)-5,10-methylene-5,6,7,8-tetrahydrofolate + NH4(+). Its function is as follows. The glycine cleavage system catalyzes the degradation of glycine. The polypeptide is Probable aminomethyltransferase (Pyrococcus horikoshii (strain ATCC 700860 / DSM 12428 / JCM 9974 / NBRC 100139 / OT-3)).